A 327-amino-acid polypeptide reads, in one-letter code: Transaldolase (327 aa).

Residue K132 is the Schiff-base intermediate with substrate of the active site.

It belongs to the transaldolase family. Type 1 subfamily.

The protein resides in the cytoplasm. The enzyme catalyses D-sedoheptulose 7-phosphate + D-glyceraldehyde 3-phosphate = D-erythrose 4-phosphate + beta-D-fructose 6-phosphate. Its pathway is carbohydrate degradation; pentose phosphate pathway; D-glyceraldehyde 3-phosphate and beta-D-fructose 6-phosphate from D-ribose 5-phosphate and D-xylulose 5-phosphate (non-oxidative stage): step 2/3. Functionally, transaldolase is important for the balance of metabolites in the pentose-phosphate pathway. The polypeptide is Transaldolase (Chlamydia trachomatis serovar D (strain ATCC VR-885 / DSM 19411 / UW-3/Cx)).